A 104-amino-acid chain; its full sequence is Large ribosomal subunit protein uL24 (104 aa).

The protein belongs to the universal ribosomal protein uL24 family. As to quaternary structure, part of the 50S ribosomal subunit.

One of two assembly initiator proteins, it binds directly to the 5'-end of the 23S rRNA, where it nucleates assembly of the 50S subunit. Its function is as follows. One of the proteins that surrounds the polypeptide exit tunnel on the outside of the subunit. This chain is Large ribosomal subunit protein uL24, found in Nitrobacter hamburgensis (strain DSM 10229 / NCIMB 13809 / X14).